A 229-amino-acid polypeptide reads, in one-letter code: Ribose-5-phosphate isomerase A (229 aa).

Substrate contacts are provided by residues 28-31 (TGST), 85-88 (DGAD), and 98-101 (KGRG). Catalysis depends on E107, which acts as the Proton acceptor. K125 lines the substrate pocket.

It belongs to the ribose 5-phosphate isomerase family. In terms of assembly, homotetramer.

The catalysed reaction is aldehydo-D-ribose 5-phosphate = D-ribulose 5-phosphate. It participates in carbohydrate degradation; pentose phosphate pathway; D-ribose 5-phosphate from D-ribulose 5-phosphate (non-oxidative stage): step 1/1. Its activity is regulated as follows. Inhibited by D-4-phosphoerythronic acid. In terms of biological role, involved in the first step of the non-oxidative branch of the pentose phosphate pathway. It catalyzes the reversible conversion of ribose-5-phosphate to ribulose 5-phosphate. In Pyrococcus horikoshii (strain ATCC 700860 / DSM 12428 / JCM 9974 / NBRC 100139 / OT-3), this protein is Ribose-5-phosphate isomerase A.